The following is a 236-amino-acid chain: 2,3,4,5-tetrahydropyridine-2,6-dicarboxylate N-acetyltransferase (236 aa).

It belongs to the transferase hexapeptide repeat family. DapH subfamily.

The catalysed reaction is (S)-2,3,4,5-tetrahydrodipicolinate + acetyl-CoA + H2O = L-2-acetamido-6-oxoheptanedioate + CoA. The protein operates within amino-acid biosynthesis; L-lysine biosynthesis via DAP pathway; LL-2,6-diaminopimelate from (S)-tetrahydrodipicolinate (acetylase route): step 1/3. Catalyzes the transfer of an acetyl group from acetyl-CoA to tetrahydrodipicolinate. In Oceanobacillus iheyensis (strain DSM 14371 / CIP 107618 / JCM 11309 / KCTC 3954 / HTE831), this protein is 2,3,4,5-tetrahydropyridine-2,6-dicarboxylate N-acetyltransferase.